The sequence spans 438 residues: Mannose-1-phosphate guanylyltransferase regulatory subunit alpha (438 aa).

The substrate-binding domain stretch occupies residues 2-260 (LKAVILIGGP…PNWWSQLKTA (259 aa)). Glu87 and Gln256 together coordinate GDP-alpha-D-mannose. The tract at residues 282–438 (LANVGIKRGE…SRSFKNEIIL (157 aa)) is hexapeptide repeat domain. The segment at 373–402 (TPSDPDPNKPFAKMENPPLFNNEGKLNPSI) is C-loop.

It belongs to the transferase hexapeptide repeat family. In terms of assembly, component of the GMPPA-GMPPB mannose-1-phosphate guanylyltransferase complex composed of 4 GMPPA subunits and 8 GMPPB subunits; the complex is organized into three layers, a central layer made up of 2 GMPPA dimers sandwiched between two layers each made up of 2 GMPPB dimers.

Its function is as follows. Regulatory subunit of the GMPPA-GMPPB mannose-1-phosphate guanylyltransferase complex; reduces the catalytic activity of GMPPB when part of the complex. Mediates allosteric feedback inhibition of GMPPB catalytic activity upon binding GDP-alpha-D-mannose. Together with GMPPB regulates GDP-alpha-D-mannose levels. This is Mannose-1-phosphate guanylyltransferase regulatory subunit alpha from Drosophila melanogaster (Fruit fly).